We begin with the raw amino-acid sequence, 150 residues long: Endoribonuclease YbeY (150 aa).

The Zn(2+) site is built by His-102, His-106, and His-112.

It belongs to the endoribonuclease YbeY family. It depends on Zn(2+) as a cofactor.

Its subcellular location is the cytoplasm. Single strand-specific metallo-endoribonuclease involved in late-stage 70S ribosome quality control and in maturation of the 3' terminus of the 16S rRNA. The polypeptide is Endoribonuclease YbeY (Thermotoga petrophila (strain ATCC BAA-488 / DSM 13995 / JCM 10881 / RKU-1)).